Here is a 249-residue protein sequence, read N- to C-terminus: Probable WRKY transcription factor 64 (249 aa).

Residues 97–165 (SPTPRPDDGF…YLGKHVCKAV (69 aa)) constitute a DNA-binding region (WRKY).

This sequence belongs to the WRKY group III family.

The protein localises to the nucleus. Functionally, transcription factor. Interacts specifically with the W box (5'-(T)TGAC[CT]-3'), a frequently occurring elicitor-responsive cis-acting element. The sequence is that of Probable WRKY transcription factor 64 (WRKY64) from Arabidopsis thaliana (Mouse-ear cress).